A 120-amino-acid polypeptide reads, in one-letter code: Immunoglobulin lambda variable 4-60 (120 aa).

The N-terminal stretch at 1–21 is a signal peptide; sequence MAWTPLLLLFPLLLHCTGSLS. Positions 22 to 46 are framework-1; it reads QPVLTQSSSASASLGSSVKLTCTLS. One can recognise an Ig-like domain in the interval 23–120; the sequence is PVLTQSSSAS…YYCETWDSNT (98 aa). The cysteines at positions 43 and 113 are disulfide-linked. The segment at 47–53 is complementarity-determining-1; the sequence is SGHSSYI. Positions 54-70 are framework-2; it reads IAWHQQQPGKAPRYLMK. The segment at 71–77 is complementarity-determining-2; sequence LEGSGSY. Residues 78–113 are framework-3; sequence NKGSGVPDRFSGSSSGADRYLTISNLQFEDEADYYC. The tract at residues 114-120 is complementarity-determining-3; the sequence is ETWDSNT.

In terms of assembly, immunoglobulins are composed of two identical heavy chains and two identical light chains; disulfide-linked.

It is found in the secreted. Its subcellular location is the cell membrane. Its function is as follows. V region of the variable domain of immunoglobulin light chains that participates in the antigen recognition. Immunoglobulins, also known as antibodies, are membrane-bound or secreted glycoproteins produced by B lymphocytes. In the recognition phase of humoral immunity, the membrane-bound immunoglobulins serve as receptors which, upon binding of a specific antigen, trigger the clonal expansion and differentiation of B lymphocytes into immunoglobulins-secreting plasma cells. Secreted immunoglobulins mediate the effector phase of humoral immunity, which results in the elimination of bound antigens. The antigen binding site is formed by the variable domain of one heavy chain, together with that of its associated light chain. Thus, each immunoglobulin has two antigen binding sites with remarkable affinity for a particular antigen. The variable domains are assembled by a process called V-(D)-J rearrangement and can then be subjected to somatic hypermutations which, after exposure to antigen and selection, allow affinity maturation for a particular antigen. The polypeptide is Immunoglobulin lambda variable 4-60 (Homo sapiens (Human)).